Consider the following 210-residue polypeptide: High frequency lysogenization protein HflD homolog (210 aa).

Residues 103 to 130 adopt a coiled-coil conformation; the sequence is EAKAKLAERLQQIERQLPLYENDIMADQ.

This sequence belongs to the HflD family.

It localises to the cytoplasm. It is found in the cell inner membrane. The sequence is that of High frequency lysogenization protein HflD homolog from Actinobacillus pleuropneumoniae serotype 3 (strain JL03).